Consider the following 63-residue polypeptide: Large ribosomal subunit protein uL30 (63 aa).

It belongs to the universal ribosomal protein uL30 family. Part of the 50S ribosomal subunit.

This is Large ribosomal subunit protein uL30 from Rickettsia akari (strain Hartford).